A 366-amino-acid chain; its full sequence is tRNA/tmRNA (uracil-C(5))-methyltransferase (366 aa).

Residues glutamine 190, tyrosine 218, asparagine 223, glutamate 239, and aspartate 299 each contribute to the S-adenosyl-L-methionine site. Cysteine 324 acts as the Nucleophile in catalysis. The Proton acceptor role is filled by glutamate 358.

It belongs to the class I-like SAM-binding methyltransferase superfamily. RNA M5U methyltransferase family. TrmA subfamily.

The enzyme catalyses uridine(54) in tRNA + S-adenosyl-L-methionine = 5-methyluridine(54) in tRNA + S-adenosyl-L-homocysteine + H(+). It carries out the reaction uridine(341) in tmRNA + S-adenosyl-L-methionine = 5-methyluridine(341) in tmRNA + S-adenosyl-L-homocysteine + H(+). Its function is as follows. Dual-specificity methyltransferase that catalyzes the formation of 5-methyluridine at position 54 (m5U54) in all tRNAs, and that of position 341 (m5U341) in tmRNA (transfer-mRNA). The protein is tRNA/tmRNA (uracil-C(5))-methyltransferase of Klebsiella pneumoniae subsp. pneumoniae (strain ATCC 700721 / MGH 78578).